Reading from the N-terminus, the 322-residue chain is AB hydrolase superfamily protein FGSG_00044 (322 aa).

Residues 36-319 (RTTPKQPVAI…ITAEVRRIVK (284 aa)) form the AB hydrolase-1 domain.

It belongs to the AB hydrolase superfamily.

The protein operates within mycotoxin biosynthesis. AB hydrolase superfamily protein; part of the gene cluster that mediates the biosynthesis of gramillins A and B, bicyclic lipopeptides that induce cell death in maize leaves but not in wheat leaves. The nonribosomal peptide synthetase GRA1 incorporates respectively a glutamic adic (Glu), a leucine (Leu), a serine (Ser), a hydroxyglutamine (HOGln), a 2-amino decanoic acid, and 2 cysteins (CysB and CysA). The biosynthesis of 2-amino decanoic acid incorporated in gramillins could be initiated by a fatty acid synthase composed of the alpha and beta subunits FGSG_00036 and FGSG_11656. The cytochrome P450 monooxygenase FGSG_15680 could hydroxylate the fatty acid chain. Subsequent oxidation to the ketone by the oxidoreductase FGSG_00048 and transamination by aminotransferase FGSG_00049 could form 2-amino-decanoic acid. On the other hand, FGSG_15680 could also be responsible for the HO-modified glutamine at the gamma-position. Whether hydroxylation occurs on the fully assembled product or on the Gln residue prior to assembly into the gramillins requires further proof. The thioredoxin FGSG_00043 could also be required for the disulfide-bond formation between CysA and CysB. The specific involvement of the remaining proteins from the cluster is more difficult to discern, but could have broader regulatory (FGSG_00040 and FGSG_11657) or enzymatic functions (FGSG_00044 and FGSG_00045). The final C-domain of GRA1 does not possess the expected sequence of a termination CT domain, often implicated in macrocyclization and release of a cyclopeptidein fungal NRPs; and the thioesterase FGSG_00047 may act in concert with the terminal C-domain of GRA1 to catalyze the formation of the macrocyclic anhydride and release of the products. This is AB hydrolase superfamily protein FGSG_00044 from Gibberella zeae (strain ATCC MYA-4620 / CBS 123657 / FGSC 9075 / NRRL 31084 / PH-1) (Wheat head blight fungus).